A 266-amino-acid polypeptide reads, in one-letter code: Gasdermin bGSDM (266 aa).

A lipid anchor (S-palmitoyl cysteine) is attached at C4. The next 4 beta stranded transmembrane spans lie at 69 to 85 (INGQ…GINI), 97 to 114 (AGIE…FEFS), 163 to 180 (EFTV…QLDV), and 189 to 205 (GKLK…TVTY). The segment at 238-266 (AMALDAAGGVMPSDSALLDEGGLLDLEGF) is C-terminal region.

It belongs to the bacterial gasdermin family. As to quaternary structure, monomer in solution. Homooligomer; forms homooligomeric ring-shaped pores when inserted in membranes with 48-54 subunits per ring. Palmitoylation helps stabilize the inactive state; may self palmitoylate. Palmitoylation plays a significant role in pore formation.

The protein localises to the cytoplasm. It is found in the cell inner membrane. Its activity is regulated as follows. The full-length protein before cleavage is inactive: intramolecular interactions between the N-terminal domain and the C-terminal region as well as the lipid modification, mediate autoinhibition. The pyroptosis-like-inducing activity is carried by the released N-terminal domain (Gasdermin bGSDM, N-terminus). Precursor of a pore-forming protein involved in defense against bacteriophages. Expression of bGSDM and the neighboring protease gene (Ga0334635_1659) is toxic in E.coli. Cleavage of this precursor by its dedicated protease releases the active moiety (gasdermin bGSDM, N-terminus) which inserts into membranes, forming pores and triggering cell death. Its function is as follows. Pore-forming protein that causes membrane permeabilization, probably via a pyroptosis-like activity. Makes ring-like pores with an interior pore diameter of 200-300 Angstroms, when integrated in liposomes. The chain is Gasdermin bGSDM from Vitiosangium sp. (strain GDMCC 1.1324).